The sequence spans 148 residues: Ubiquitin-conjugating enzyme E2 11 (148 aa).

The UBC core domain occupies 1–147 (MASKRILKEL…ARSWTQKYAM (147 aa)). Residue cysteine 85 is the Glycyl thioester intermediate of the active site.

It belongs to the ubiquitin-conjugating enzyme family. In terms of assembly, interacts with the E3 ubiquitin-protein ligases MBR1 and MBR2. As to expression, ubiquitously expressed. Mainly in petals.

It carries out the reaction S-ubiquitinyl-[E1 ubiquitin-activating enzyme]-L-cysteine + [E2 ubiquitin-conjugating enzyme]-L-cysteine = [E1 ubiquitin-activating enzyme]-L-cysteine + S-ubiquitinyl-[E2 ubiquitin-conjugating enzyme]-L-cysteine.. It functions in the pathway protein modification; protein ubiquitination. In terms of biological role, accepts the ubiquitin from the E1 complex and catalyzes its covalent attachment to other proteins. Mediates the selective degradation of short-lived and abnormal proteins. The protein is Ubiquitin-conjugating enzyme E2 11 (UBC11) of Arabidopsis thaliana (Mouse-ear cress).